A 541-amino-acid chain; its full sequence is NAD(P)H-quinone oxidoreductase subunit 2 A, chloroplastic (541 aa).

14 consecutive transmembrane segments (helical) span residues 24 to 44 (LLLFDGSLIFPECILIFGLIL), 57 to 77 (IPWLYFIPSTSLVMSITALLF), 99 to 119 (IFQFLILLCSTLCIPLSVEYI), 124 to 144 (MAITEFLLFVLTATLGGMFLC), 149 to 169 (FITIFVAPECFSLCSYLLSGY), 183 to 203 (YLLMGGASSSILVHGFSWLYG), 227 to 247 (PGISIALIFITVGIGFKLSPA), 289 to 309 (ILSPTPVVAFLSVTSKVAASA), 326 to 346 (WHLLLEILAILSMILGNLIAI), 354 to 374 (MLAYSSIGQIGYVIIGIIVGD), 385 to 405 (YMLFYISMNLGTFACIVLFGL), 426 to 446 (ALSLALCLLSLGGLPPLAGFF), 449 to 469 (LYLFWCGWQAGLYFLVLIGLL), and 515 to 535 (MIVCVIASTIPGISMNPIIAI).

This sequence belongs to the complex I subunit 2 family. As to quaternary structure, NDH is composed of at least 16 different subunits, 5 of which are encoded in the nucleus.

It localises to the plastid. It is found in the chloroplast thylakoid membrane. It catalyses the reaction a plastoquinone + NADH + (n+1) H(+)(in) = a plastoquinol + NAD(+) + n H(+)(out). The catalysed reaction is a plastoquinone + NADPH + (n+1) H(+)(in) = a plastoquinol + NADP(+) + n H(+)(out). NDH shuttles electrons from NAD(P)H:plastoquinone, via FMN and iron-sulfur (Fe-S) centers, to quinones in the photosynthetic chain and possibly in a chloroplast respiratory chain. The immediate electron acceptor for the enzyme in this species is believed to be plastoquinone. Couples the redox reaction to proton translocation, and thus conserves the redox energy in a proton gradient. This is NAD(P)H-quinone oxidoreductase subunit 2 A, chloroplastic from Coffea arabica (Arabian coffee).